A 171-amino-acid polypeptide reads, in one-letter code: 3-hydroxydecanoyl-[acyl-carrier-protein] dehydratase (171 aa).

Residue histidine 70 is part of the active site.

Belongs to the thioester dehydratase family. FabA subfamily. In terms of assembly, homodimer.

The protein resides in the cytoplasm. It carries out the reaction a (3R)-hydroxyacyl-[ACP] = a (2E)-enoyl-[ACP] + H2O. The enzyme catalyses (3R)-hydroxydecanoyl-[ACP] = (2E)-decenoyl-[ACP] + H2O. The catalysed reaction is (2E)-decenoyl-[ACP] = (3Z)-decenoyl-[ACP]. It participates in lipid metabolism; fatty acid biosynthesis. Its function is as follows. Necessary for the introduction of cis unsaturation into fatty acids. Catalyzes the dehydration of (3R)-3-hydroxydecanoyl-ACP to E-(2)-decenoyl-ACP and then its isomerization to Z-(3)-decenoyl-ACP. Can catalyze the dehydratase reaction for beta-hydroxyacyl-ACPs with saturated chain lengths up to 16:0, being most active on intermediate chain length. In Stenotrophomonas maltophilia (strain K279a), this protein is 3-hydroxydecanoyl-[acyl-carrier-protein] dehydratase.